The primary structure comprises 65 residues: SPbeta prophage-derived uncharacterized protein YorO (65 aa).

This chain is SPbeta prophage-derived uncharacterized protein YorO (yorO), found in Bacillus subtilis (strain 168).